The sequence spans 165 residues: NAD(P)H-quinone oxidoreductase subunit I, chloroplastic (165 aa).

2 4Fe-4S ferredoxin-type domains span residues 55–84 (GRIH…VDWE) and 95–124 (KSYS…MTEE). [4Fe-4S] cluster-binding residues include cysteine 64, cysteine 67, cysteine 70, cysteine 74, cysteine 104, cysteine 107, cysteine 110, and cysteine 114.

Belongs to the complex I 23 kDa subunit family. As to quaternary structure, NDH is composed of at least 16 different subunits, 5 of which are encoded in the nucleus. The cofactor is [4Fe-4S] cluster.

The protein resides in the plastid. Its subcellular location is the chloroplast thylakoid membrane. The catalysed reaction is a plastoquinone + NADH + (n+1) H(+)(in) = a plastoquinol + NAD(+) + n H(+)(out). The enzyme catalyses a plastoquinone + NADPH + (n+1) H(+)(in) = a plastoquinol + NADP(+) + n H(+)(out). Its function is as follows. NDH shuttles electrons from NAD(P)H:plastoquinone, via FMN and iron-sulfur (Fe-S) centers, to quinones in the photosynthetic chain and possibly in a chloroplast respiratory chain. The immediate electron acceptor for the enzyme in this species is believed to be plastoquinone. Couples the redox reaction to proton translocation, and thus conserves the redox energy in a proton gradient. This is NAD(P)H-quinone oxidoreductase subunit I, chloroplastic from Psilotum nudum (Whisk fern).